Here is a 315-residue protein sequence, read N- to C-terminus: Methionyl-tRNA formyltransferase (315 aa).

112-115 (SLLP) contributes to the (6S)-5,6,7,8-tetrahydrofolate binding site.

It belongs to the Fmt family.

The enzyme catalyses L-methionyl-tRNA(fMet) + (6R)-10-formyltetrahydrofolate = N-formyl-L-methionyl-tRNA(fMet) + (6S)-5,6,7,8-tetrahydrofolate + H(+). Attaches a formyl group to the free amino group of methionyl-tRNA(fMet). The formyl group appears to play a dual role in the initiator identity of N-formylmethionyl-tRNA by promoting its recognition by IF2 and preventing the misappropriation of this tRNA by the elongation apparatus. The polypeptide is Methionyl-tRNA formyltransferase (Leptospira borgpetersenii serovar Hardjo-bovis (strain JB197)).